Consider the following 196-residue polypeptide: uncharacterized protein (196 aa).

Residues 58–163 form the Bro-N domain; it reads HKFFDAIKDS…IILPNNYHKN (106 aa).

This is an uncharacterized protein from Acanthamoeba polyphaga mimivirus (APMV).